The following is a 405-amino-acid chain: Succinyl-CoA--L-malate CoA-transferase beta subunit (405 aa).

The active-site Nucleophile is the aspartate 175.

The protein belongs to the CoA-transferase III family. Forms a large complex composed of six heterodimers (alpha, beta).

The enzyme catalyses succinyl-CoA + (S)-malate = (S)-malyl-CoA + succinate. It carries out the reaction (3S)-citramalate + succinyl-CoA = (3S)-citramalyl-CoA + succinate. In terms of biological role, involved in the 3-hydroxypropionate cycle used for autotrophic carbon dioxide fixation. Catalyzes the transfer of CoA moiety from succinyl-CoA to L-malate to yield L-malyl-CoA. This chain is Succinyl-CoA--L-malate CoA-transferase beta subunit (smtB), found in Chloroflexus aurantiacus (strain ATCC 29366 / DSM 635 / J-10-fl).